We begin with the raw amino-acid sequence, 476 residues long: Proline--tRNA ligase (476 aa).

The protein belongs to the class-II aminoacyl-tRNA synthetase family. ProS type 3 subfamily. As to quaternary structure, homodimer.

It is found in the cytoplasm. The catalysed reaction is tRNA(Pro) + L-proline + ATP = L-prolyl-tRNA(Pro) + AMP + diphosphate. In terms of biological role, catalyzes the attachment of proline to tRNA(Pro) in a two-step reaction: proline is first activated by ATP to form Pro-AMP and then transferred to the acceptor end of tRNA(Pro). In Mycoplasmopsis pulmonis (strain UAB CTIP) (Mycoplasma pulmonis), this protein is Proline--tRNA ligase.